We begin with the raw amino-acid sequence, 310 residues long: Glycine--tRNA ligase alpha subunit (310 aa).

Belongs to the class-II aminoacyl-tRNA synthetase family. As to quaternary structure, tetramer of two alpha and two beta subunits.

It is found in the cytoplasm. The enzyme catalyses tRNA(Gly) + glycine + ATP = glycyl-tRNA(Gly) + AMP + diphosphate. This is Glycine--tRNA ligase alpha subunit from Agrobacterium fabrum (strain C58 / ATCC 33970) (Agrobacterium tumefaciens (strain C58)).